The chain runs to 120 residues: NAD(P)H-quinone oxidoreductase subunit 3, chloroplastic (120 aa).

3 consecutive transmembrane segments (helical) span residues 9–29, 64–84, and 89–109; these read YFWL…PISS, MFAS…PWAM, and LGVP…VGSV.

Belongs to the complex I subunit 3 family. As to quaternary structure, NDH is composed of at least 16 different subunits, 5 of which are encoded in the nucleus.

It is found in the plastid. Its subcellular location is the chloroplast thylakoid membrane. The catalysed reaction is a plastoquinone + NADH + (n+1) H(+)(in) = a plastoquinol + NAD(+) + n H(+)(out). The enzyme catalyses a plastoquinone + NADPH + (n+1) H(+)(in) = a plastoquinol + NADP(+) + n H(+)(out). In terms of biological role, NDH shuttles electrons from NAD(P)H:plastoquinone, via FMN and iron-sulfur (Fe-S) centers, to quinones in the photosynthetic chain and possibly in a chloroplast respiratory chain. The immediate electron acceptor for the enzyme in this species is believed to be plastoquinone. Couples the redox reaction to proton translocation, and thus conserves the redox energy in a proton gradient. This Huperzia lucidula (Shining clubmoss) protein is NAD(P)H-quinone oxidoreductase subunit 3, chloroplastic.